We begin with the raw amino-acid sequence, 365 residues long: Peptide chain release factor 2 (365 aa).

Q251 carries the N5-methylglutamine modification.

The protein belongs to the prokaryotic/mitochondrial release factor family. Post-translationally, methylated by PrmC. Methylation increases the termination efficiency of RF2.

Its subcellular location is the cytoplasm. Functionally, peptide chain release factor 2 directs the termination of translation in response to the peptide chain termination codons UGA and UAA. The polypeptide is Peptide chain release factor 2 (Campylobacter jejuni subsp. jejuni serotype O:6 (strain 81116 / NCTC 11828)).